The following is a 166-amino-acid chain: Crossover junction endodeoxyribonuclease RuvC (166 aa).

Residues aspartate 11, glutamate 71, and aspartate 142 contribute to the active site. Aspartate 11, glutamate 71, and aspartate 142 together coordinate Mg(2+).

Belongs to the RuvC family. In terms of assembly, homodimer which binds Holliday junction (HJ) DNA. The HJ becomes 2-fold symmetrical on binding to RuvC with unstacked arms; it has a different conformation from HJ DNA in complex with RuvA. In the full resolvosome a probable DNA-RuvA(4)-RuvB(12)-RuvC(2) complex forms which resolves the HJ. Mg(2+) is required as a cofactor.

It localises to the cytoplasm. The enzyme catalyses Endonucleolytic cleavage at a junction such as a reciprocal single-stranded crossover between two homologous DNA duplexes (Holliday junction).. In terms of biological role, the RuvA-RuvB-RuvC complex processes Holliday junction (HJ) DNA during genetic recombination and DNA repair. Endonuclease that resolves HJ intermediates. Cleaves cruciform DNA by making single-stranded nicks across the HJ at symmetrical positions within the homologous arms, yielding a 5'-phosphate and a 3'-hydroxyl group; requires a central core of homology in the junction. The consensus cleavage sequence is 5'-(A/T)TT(C/G)-3'. Cleavage occurs on the 3'-side of the TT dinucleotide at the point of strand exchange. HJ branch migration catalyzed by RuvA-RuvB allows RuvC to scan DNA until it finds its consensus sequence, where it cleaves and resolves the cruciform DNA. This chain is Crossover junction endodeoxyribonuclease RuvC, found in Maricaulis maris (strain MCS10) (Caulobacter maris).